Consider the following 385-residue polypeptide: MSTTTTMRAWTYMQSGLPSQTIVLDDEAPSPSAAELGPDELLIAVNYVAMNSGFTTLMRSLPPQPYSLPHIYNRQKRLGVPEFEFSGRILAVGSAIPSTRPDLQPSTLVLGCCAAKRVFIEGKGALAERVIAPAAQLIPLRPLSTVTTQDDESPGPDPAAPPISLLEASGLSACGCTAVQVLDLTKLVAGDKLFVNGGSTSVGMLTIQVARQVLGQTGTIIASGTDTTLIRSVGADDVIDYTAQRPLHEFLRTHHADRPFDAIIDCVGVAELYTHCEPYLAPGKLFINLGAMTAKPTFWGLLSFVWNQHMAPLWPVVLGGVPRSYQFYSARPNRETLGRVMRLVERGELRMVVDSVWEMRDAKMAYKRMESKRAKGKIIVRVQEE.

64–67 (QPYS) serves as a coordination point for NADP(+). Residue 156 to 163 (PDPAAPPI) coordinates substrate. NADP(+) contacts are provided by residues 199–202 (STSV), 223–226 (SGTD), Y241, and 289–290 (LG). Substrate is bound at residue 309–313 (HMAPL). 372 to 373 (KR) serves as a coordination point for NADP(+).

Belongs to the zinc-containing alcohol dehydrogenase family. As to quaternary structure, monomer.

It participates in secondary metabolite biosynthesis. Functionally, trans-enoyl reductase; part of the gene cluster that mediates the biosynthesis of oxaleimides, cytotoxic compounds containing an unusual disubstituted succinimide moiety. The first step of the pathway is provided by the HR-PKS poxF that serves in a new mode of collaborative biosynthesis with the PKS-NRPS poxE, by providing the olefin containing amino acid substrate via the synthesis of an ACP-bound dec-4-enoate. The cytochrome P450 monooxygenase poxM-catalyzed oxidation at the alpha-position creates the enzyme-bound 2-hydroxydec-4-enoyl-ACP thioester, which may be prone to spontaneous hydrolysis to yield 2-hydroxydec-4-enoic acid due to increased electrophilicity of the carbonyl. 2-hydroxydec-4-enoic acid can then be further oxidized by poxM to yield the alpha-ketoacid 2-oxodec-4-enoicacid, which is reductively aminated by the aminotransferase poxL to yield (S,E)-2-aminodec-4-enoic acid. The Hybrid PKS-NRPS synthetase poxE then performs condensation between the octaketide product of its PKS modules and the amino group of (S,E)-2-aminodec-4-enoic acid which is activated and incorporated by the adenylation domain. The resulting aminoacyl product can be cyclized by the Diels-Alderase PoxQ and reductively released by the reductive (R) domain of poxE to yield an aldehyde intermediate. The released aldehyde is then substrate for a Knoevenagel condensation by the hydrolyase poxO followed by an oxidation at the 5-position of the pyrrolidone ring. The presence of the olefin from the amino acid building block allows for migration of the substituted allyl group to occur. This allylic transposition reaction takes place in a conjugate addition, semipinacol-like fashion to yield a succinimide intermediate. Iterative two-electron oxidations of the C7 methyl of the succinimide intermediate to the carboxylic acid can be catalyzed by one of two remaining cytochrome P450 monooxygenasess poxC or poxD to yield oxaleimide A. Subsequent oxidation yields the maleimide scaffold oxaleimide I. Both oxaleimide A and oxaleimide I can undergo oxidative modifications in the decalin ring to yield the series of products oxaleimides B to H. In Penicillium oxalicum, this protein is Trans-enoyl reductase poxH.